Reading from the N-terminus, the 147-residue chain is Mitochondrial import receptor subunit TOM20 homolog (147 aa).

Residues 1–3 (MVA) are Mitochondrial intermembrane-facing. Residues 4–26 (VGKTSAIAAGVCGALLLGYCIYF) form a helical membrane-spanning segment. Residues 27–147 (DRKRRSDPNF…AQNLSEDDVE (121 aa)) are Cytoplasmic-facing.

The protein belongs to the Tom20 family. In terms of assembly, forms part of the preprotein translocase complex of the outer mitochondrial membrane (TOM complex). Interacts with tom22.

It is found in the mitochondrion outer membrane. Functionally, central component of the receptor complex responsible for the recognition and translocation of cytosolically synthesized mitochondrial preproteins. Together with tom22 functions as the transit peptide receptor at the surface of the mitochondrion outer membrane and facilitates the movement of preproteins into the tom40 translocation pore. This Xenopus laevis (African clawed frog) protein is Mitochondrial import receptor subunit TOM20 homolog (tomm20).